Here is a 274-residue protein sequence, read N- to C-terminus: 2,3,4,5-tetrahydropyridine-2,6-dicarboxylate N-succinyltransferase (274 aa).

Positions 106 and 143 each coordinate substrate.

This sequence belongs to the transferase hexapeptide repeat family. Homotrimer.

Its subcellular location is the cytoplasm. The enzyme catalyses (S)-2,3,4,5-tetrahydrodipicolinate + succinyl-CoA + H2O = (S)-2-succinylamino-6-oxoheptanedioate + CoA. It participates in amino-acid biosynthesis; L-lysine biosynthesis via DAP pathway; LL-2,6-diaminopimelate from (S)-tetrahydrodipicolinate (succinylase route): step 1/3. This chain is 2,3,4,5-tetrahydropyridine-2,6-dicarboxylate N-succinyltransferase, found in Rickettsia typhi (strain ATCC VR-144 / Wilmington).